The sequence spans 510 residues: 2,3-bisphosphoglycerate-independent phosphoglycerate mutase (510 aa).

Mn(2+)-binding residues include D14 and S64. Catalysis depends on S64, which acts as the Phosphoserine intermediate. Residues H125, R155–D156, R187, R193, R259–R262, and K332 contribute to the substrate site. Mn(2+) is bound by residues D399, H403, D440, H441, and H459.

Belongs to the BPG-independent phosphoglycerate mutase family. Monomer. Mn(2+) is required as a cofactor.

It carries out the reaction (2R)-2-phosphoglycerate = (2R)-3-phosphoglycerate. The protein operates within carbohydrate degradation; glycolysis; pyruvate from D-glyceraldehyde 3-phosphate: step 3/5. Catalyzes the interconversion of 2-phosphoglycerate and 3-phosphoglycerate. Essential for the growth and pathogenicity on the host plant. This chain is 2,3-bisphosphoglycerate-independent phosphoglycerate mutase, found in Pseudomonas syringae pv. tomato (strain ATCC BAA-871 / DC3000).